The primary structure comprises 172 residues: Peptidyl-prolyl cis-trans isomerase CYP18-4 (172 aa).

The 164-residue stretch at 7–170 (FFDMSLSGTP…KVVTITDCGQ (164 aa)) folds into the PPIase cyclophilin-type domain.

It belongs to the cyclophilin-type PPIase family. Interacts with A.tumefaciens VirD2. Ubiquitous, with higher levels in roots and flowers. Confined to vascular tissues. Also detected in stigmas, base of siliques and anthers.

Its subcellular location is the cytoplasm. It carries out the reaction [protein]-peptidylproline (omega=180) = [protein]-peptidylproline (omega=0). With respect to regulation, binds cyclosporin A (CsA). CsA mediates some of its effects via an inhibitory action on PPIase. Its function is as follows. PPIases accelerate the folding of proteins. It catalyzes the cis-trans isomerization of proline imidic peptide bonds in oligopeptides. This Arabidopsis thaliana (Mouse-ear cress) protein is Peptidyl-prolyl cis-trans isomerase CYP18-4 (CYP18-4).